Here is a 485-residue protein sequence, read N- to C-terminus: Regulatory protein ViaA (485 aa).

Belongs to the ViaA family. In terms of assembly, homodimer. Interacts with RavA.

The protein resides in the cytoplasm. Functionally, component of the RavA-ViaA chaperone complex, which may act on the membrane to optimize the function of some of the respiratory chains. ViaA stimulates the ATPase activity of RavA. This chain is Regulatory protein ViaA, found in Photorhabdus laumondii subsp. laumondii (strain DSM 15139 / CIP 105565 / TT01) (Photorhabdus luminescens subsp. laumondii).